Here is a 216-residue protein sequence, read N- to C-terminus: NKG2-D type II integral membrane protein (216 aa).

The Cytoplasmic segment spans residues 1-51 (MGWIRGRRSRHSWEMSEFHNYNLDLKKSDFSTRWQKQRCPVVKSKCRENAS). The chain crosses the membrane as a helical; Signal-anchor for type II membrane protein span at residues 52 to 72 (PFFFCCFIAVAMGIRFIIMVT). At 73–216 (IWSAVFLNSL…NTYICMQRTV (144 aa)) the chain is on the extracellular side. 4 disulfides stabilise this stretch: Cys96–Cys105, Cys99–Cys110, Cys127–Cys211, and Cys189–Cys203. Residues 98–213 (PCPKNWICYK…STPNTYICMQ (116 aa)) enclose the C-type lectin domain. N-linked (GlcNAc...) asparagine glycosylation is found at Asn131, Asn163, and Asn202.

Homodimer; disulfide-linked. Heterohexamer composed of two subunits of KLRK1 and four subunits of HCST/DAP10. Interacts (via transmembrane domain) with HCST/DAP10 (via transmembrane domain); the interaction is required for KLRK1 NK cell surface and induces NK cell-mediated cytotoxicity. Does not interact with TYROBP. Interacts with CEACAM1; recruits PTPN6 that dephosphorylates VAV1. Expressed in natural killer (NK) cells, CD8(+) alpha-beta and gamma-delta T-cells. Expressed on essentially all CD56+CD3- NK cells from freshly isolated PBMC. Expressed in interferon-producing killer dendritic cells (IKDCs).

It localises to the cell membrane. In terms of biological role, functions as an activating and costimulatory receptor involved in immunosurveillance upon binding to various cellular stress-inducible ligands displayed at the surface of autologous tumor cells and virus-infected cells. Provides both stimulatory and costimulatory innate immune responses on activated killer (NK) cells, leading to cytotoxic activity. Acts as a costimulatory receptor for T-cell receptor (TCR) in CD8(+) T-cell-mediated adaptive immune responses by amplifying T-cell activation. Stimulates perforin-mediated elimination of ligand-expressing tumor cells. Signaling involves calcium influx, culminating in the expression of TNF-alpha. Participates in NK cell-mediated bone marrow graft rejection. May play a regulatory role in differentiation and survival of NK cells. Binds to ligands belonging to various subfamilies of MHC class I-related glycoproteins including MICA, MICB, RAET1E, RAET1G, RAET1L/ULBP6, ULBP1, ULBP2, ULBP3 (ULBP2&gt;ULBP1&gt;ULBP3) and ULBP4. This Homo sapiens (Human) protein is NKG2-D type II integral membrane protein (KLRK1).